The primary structure comprises 588 residues: Serine/threonine-protein phosphatase 2A 65 kDa regulatory subunit A alpha isoform (588 aa).

14 HEAT repeats span residues 2–42 (AMVD…ALGE), 44–80 (RTRK…FVGG), 81–119 (IEFA…QMKE), 158–196 (DVLK…TVES), 197–235 (TFLI…LLEP), 236–274 (QDCV…AVGP), 275–313 (DCTR…LLNP), 315–352 (LAIQ…ILGK), 353–391 (DSTI…VIGI), 393–430 (LLSQ…QLGI), 432–469 (FFDD…EFGP), 470–508 (EWAM…VMGS), 509–547 (EITC…IVDQ), and 549–586 (VVDK…STAA).

It belongs to the phosphatase 2A regulatory subunit A family. As to quaternary structure, PP2A consists of a common heterodimeric core enzyme, composed of a 36 kDa catalytic subunit (subunit C) and a 65 kDa constant regulatory subunit (subunit A), that associates with a variety of regulatory subunits such as subunits B (the R2/B/PR55/B55, R3/B''/PR72/PR130/PR59 and R5/B'/B56 families) and the regulatory subunits TON2. Interacts with CYP20-1/ROC7. Also interacts with phosphatidic acid (PA), a lipid signaling molecule. Interacts with CHIP. Interacts with SIC/RON3. Ubiquitinated. CHIP-mediated ubiquitination enhances phosphatase activity after an abiotic stress such as low temperature or darkness. Mostly expressed in cell-dividing tissues such as apical meristems. Ubiquitous, with higher levels in roots and flowers (at protein level).

The protein resides in the cytoplasm. The protein localises to the cytosol. It is found in the nucleus. In terms of biological role, the A subunit of protein phosphatase 2A serves as a scaffolding molecule to coordinate the assembly of the catalytic subunit and a variable regulatory B subunit. Seems to act as a positive regulator of PP2A catalytic activity. Confers resistance to phosphatase inhibitors such as okadaic acid and cantharidin. Involved during developmental process such as seedling and floral developments, root gravitropism, and stomatal opening regulation. Involved in the regulation of auxin efflux, especially during basipetal (tips to base) auxin transport in roots, and appears to contribute to the perception of auxin efflux inhibitors such as 1-N-naphthylphthalamic acid (NPA) and to semicarbazone I (substituted phenylsemicarbazone of 2-acetylarylcarboxylic acids) (SCB-I). Modulates the magnitude of ethylene response in the hypocotyl and stem, and functions as a general positive transducer of early ABA signaling. The holoenzyme composed of PP2AA1, PP2A4 and B'ZETA or B'ETA acts as a negative regulator of plant innate immunity by controlling BAK1 phosphorylation state and activation in surface-localized immune receptor complexes. The sequence is that of Serine/threonine-protein phosphatase 2A 65 kDa regulatory subunit A alpha isoform (PP2AA1) from Arabidopsis thaliana (Mouse-ear cress).